We begin with the raw amino-acid sequence, 191 residues long: Corticoliberin (191 aa).

The N-terminal stretch at 1–24 is a signal peptide; the sequence is MRLPLLVSAGVLLVALLPCPPCRA. The propeptide occupies 25–148; the sequence is LLSRGPVLGA…RQEAPERERR (124 aa). The segment at 115–153 is disordered; it reads PLPRRPLDSPSGPAERGAENALSSRQEAPERERRSEEPP. Residues 141 to 151 show a composition bias toward basic and acidic residues; that stretch reads EAPERERRSEE. Ile189 carries the post-translational modification Isoleucine amide.

It belongs to the sauvagine/corticotropin-releasing factor/urotensin I family. Interacts (via C-terminus) with CRFR1 (via N-terminal extracellular domain). As to expression, produced by the hypothalamus.

The protein localises to the secreted. In terms of biological role, hormone regulating the release of corticotropin from pituitary gland. Induces NLRP6 in intestinal epithelial cells, hence may influence gut microbiota profile. In Sus scrofa (Pig), this protein is Corticoliberin (CRH).